Consider the following 215-residue polypeptide: Ion-translocating oxidoreductase complex subunit G (215 aa).

The chain crosses the membrane as a helical span at residues 9-29 (GLILSLFAIITSGLIALTYFG). At T176 the chain carries FMN phosphoryl threonine.

Belongs to the RnfG family. The complex is composed of six subunits: RnfA, RnfB, RnfC, RnfD, RnfE and RnfG. FMN serves as cofactor.

It is found in the cell inner membrane. Functionally, part of a membrane-bound complex that couples electron transfer with translocation of ions across the membrane. The sequence is that of Ion-translocating oxidoreductase complex subunit G from Pseudoalteromonas atlantica (strain T6c / ATCC BAA-1087).